The sequence spans 430 residues: Na(+)/H(+) antiporter NhaA 2 (430 aa).

A run of 10 helical transmembrane segments spans residues 11 to 31, 60 to 80, 97 to 117, 127 to 147, 181 to 201, 215 to 235, 288 to 308, 309 to 329, 356 to 376, and 393 to 413; these read FVHG…IAFI, LSLE…LVGL, VALA…LYTA, GWGV…ALLG, LNLT…YAGW, VLLW…GVLL, HALH…TNAG, VPVA…GLLL, WGHM…SLFV, and GVLL…LLGI.

It belongs to the NhaA Na(+)/H(+) (TC 2.A.33) antiporter family.

It is found in the cell membrane. It carries out the reaction Na(+)(in) + 2 H(+)(out) = Na(+)(out) + 2 H(+)(in). Its function is as follows. Na(+)/H(+) antiporter that extrudes sodium in exchange for external protons. The sequence is that of Na(+)/H(+) antiporter NhaA 2 from Deinococcus geothermalis (strain DSM 11300 / CIP 105573 / AG-3a).